Here is a 34-residue protein sequence, read N- to C-terminus: Photosystem II reaction center protein M (34 aa).

The helical transmembrane segment at 5–25 threads the bilayer; that stretch reads ILAFIATALFILVPTSFLLII.

This sequence belongs to the PsbM family. In terms of assembly, PSII is composed of 1 copy each of membrane proteins PsbA, PsbB, PsbC, PsbD, PsbE, PsbF, PsbH, PsbI, PsbJ, PsbK, PsbL, PsbM, PsbT, PsbX, PsbY, PsbZ, Psb30/Ycf12, at least 3 peripheral proteins of the oxygen-evolving complex and a large number of cofactors. It forms dimeric complexes.

It is found in the plastid. Its subcellular location is the chloroplast thylakoid membrane. One of the components of the core complex of photosystem II (PSII). PSII is a light-driven water:plastoquinone oxidoreductase that uses light energy to abstract electrons from H(2)O, generating O(2) and a proton gradient subsequently used for ATP formation. It consists of a core antenna complex that captures photons, and an electron transfer chain that converts photonic excitation into a charge separation. This subunit is found at the monomer-monomer interface. The sequence is that of Photosystem II reaction center protein M from Triticum aestivum (Wheat).